The following is a 393-amino-acid chain: GDNF family receptor alpha-like (393 aa).

The signal sequence occupies residues 1–19 (MLVFIFLAVTLSSENESSS). Topologically, residues 20–349 (QTNDCAHLIQ…LTGFNSFFNG (330 aa)) are extracellular. N-linked (GlcNAc...) asparagine glycosylation is found at asparagine 59, asparagine 65, asparagine 101, and asparagine 115. 11 disulfide bridges follow: cysteine 131–cysteine 189, cysteine 138–cysteine 144, cysteine 155–cysteine 167, cysteine 162–cysteine 210, cysteine 191–cysteine 198, cysteine 220–cysteine 291, cysteine 227–cysteine 233, cysteine 244–cysteine 275, cysteine 252–cysteine 258, cysteine 269–cysteine 316, and cysteine 293–cysteine 304. The required for interaction with GDF15 stretch occupies residues 149 to 228 (ALYLKACSAN…TCLSVIHTCR (80 aa)). Residues 350 to 370 (ELLYVVVCMAVTCGILFLVML) form a helical membrane-spanning segment. Over 371–393 (KLRIQSEKRDPSSIEIAGGVIIQ) the chain is Cytoplasmic.

This sequence belongs to the GDNFR family. In terms of assembly, interacts (via the extracellular domain) with GDF15 and RET; receptor of GDF15, mediates cellular signaling through interaction with RET after GDF15-binding. Interaction with RET requires previous GDF15-binding. Cleaved and inactivated by MMP14, inhibiting the GDF15-GFRAL aversive response. As to expression, expressed in the brainstem, restricted to cells in the area postrema and the immediately adjacent region of the nucleus tractus solitarius.

It localises to the cell membrane. Its activity is regulated as follows. Specifically inhibited by 3P10 monoclonal antibody. Strongly activated by LY3463251, a long-acting and stable agonist composed of GDF15 conjugated monomeric human IgG4 Fc. In terms of biological role, brainstem-restricted receptor for GDF15 hormone, which triggers an aversive response, characterized by nausea, vomiting, and/or loss of appetite in response to various stresses. The aversive response is both required to reduce continuing exposure to those stresses at the time of exposure and to promote avoidance behavior in the future. The GDF15-GFRAL aversive response is triggered by stresses, such as anticancer drugs (camptothecin or cisplatin), cancers or drugs such as metformin. Upon interaction with its ligand, GDF15, mediates the GDF15-induced autophosphorylation and activation of the RET tyrosine kinase receptor, leading to activation of MAPK- and AKT- signaling pathways. Ligand-binding activates GFRAL-expressing neurons localized in the area postrema and nucleus tractus solitarius of the brainstem. The GDF15-GFRAL signal induces expression of genes involved in metabolism, such as lipid metabolism in adipose tissues. This is GDNF family receptor alpha-like (Gfral) from Mus musculus (Mouse).